Reading from the N-terminus, the 57-residue chain is COP9 signalosome complex subunit 9 (57 aa).

Belongs to the CSN9 family. Component of the CSN complex, probably composed of cops1, cops2, cops3, cops4, cops5, cops6, cops7, cops8 and cops9.

The protein localises to the nucleus. The protein resides in the cytoplasm. It localises to the nucleoplasm. Its function is as follows. Component of the COP9 signalosome complex (CSN), a complex involved in various cellular and developmental processes. The CSN complex is an essential regulator of the ubiquitin (Ubl) conjugation pathway by mediating the deneddylation of the cullin subunits of SCF-type E3 ligase complexes, leading to decrease the Ubl ligase activity. May play a role in cell proliferation. This is COP9 signalosome complex subunit 9 from Xenopus laevis (African clawed frog).